The primary structure comprises 674 residues: Acyl-coenzyme A oxidase acox-1.1 (674 aa).

FAD contacts are provided by residues 149 to 152, 157 to 158, and glycine 191; these read YAQT and GT. Substrate is bound by residues 285–288 and arginine 295; that span reads KINY. FAD is bound by residues arginine 320 and 340 to 343; that span reads QQHR. Residues histidine 342, serine 392, histidine 396, and glutamine 404 each coordinate ATP. Glycine 411 lines the FAD pocket. Residue 433–434 coordinates substrate; the sequence is YE. Residue glutamate 434 is the Proton acceptor of the active site. Glutamate 436 is an FAD binding site. ATP-binding positions include 533–536 and tyrosine 581; that span reads RASR. Residues 672–674 carry the Microbody targeting signal motif; it reads SKL.

The protein belongs to the acyl-CoA oxidase family. Homodimer. Forms a heterodimer with acox-1.2. Forms a heterodimer with acox-1.3; the interaction may be important for the stability of acox-1.3. The cofactor is FAD. In terms of tissue distribution, expressed in hypodermis and intestine.

The protein localises to the peroxisome. The catalysed reaction is nonanoyl-CoA + O2 = (2E)-nonenoyl-CoA + H2O2. It carries out the reaction dodecanoyl-CoA + O2 = (2E)-dodecenoyl-CoA + H2O2. It catalyses the reaction a 2,3-saturated acyl-CoA + O2 = a (2E)-enoyl-CoA + H2O2. The enzyme catalyses heptanoyl-CoA + O2 = (2E)-heptenoyl-CoA + H2O2. The catalysed reaction is (8R)-8-hydroxynonanoyl-CoA + O2 = (2E,8R)-8-hydroxynonenoyl-CoA + H2O2. It carries out the reaction pentanoyl-CoA + O2 = (2E)-pentenoyl-CoA + H2O2. It catalyses the reaction hexadecanoyl-CoA + O2 = (2E)-hexadecenoyl-CoA + H2O2. The enzyme catalyses IC-asc-C7-CoA + O2 = IC-asc-DeltaC7-CoA + H2O2. The catalysed reaction is IC-asc-C9-CoA + O2 = IC-asc-DeltaC9-CoA + H2O2. It carries out the reaction asc-omegaC5-CoA + O2 = asc-omegaDeltaC5-CoA + H2O2. It catalyses the reaction asc-C7-CoA + O2 = asc-DeltaC7-CoA + H2O2. The enzyme catalyses asc-omegaC7-CoA + O2 = asc-omegaDeltaC7-CoA + H2O2. The catalysed reaction is asc-C9-CoA + O2 = asc-DeltaC9-CoA + H2O2. It carries out the reaction asc-C13-CoA + O2 = asc-DeltaC13-CoA + H2O2. It participates in lipid metabolism; peroxisomal fatty acid beta-oxidation. With respect to regulation, activated by ATP. ATP binding leads to a conformational change that promotes FAD cofactor binding and enzyme activity. ATP binding likely occurs during acox-1.1 folding and/or dimer formation. In terms of biological role, involved in the first step of peroxisomal beta-oxidation by catalyzing the desaturation of fatty acid-derived side chains. Specifically, catalyzes the desaturation of fatty acids heptanoyl-CoA (C7), nonanoyl-CoA (C9), dodecanoyl-CoA (C12) and to a lesser extent pentanoyl-CoA (C5) and hexadecanoyl-CoA (C16), and hydroxylated fatty acid hydroxynonanoyl-CoA. Also, catalyzes the desaturation fatty acid-derived side chains of ascaroside pheromones, which regulates development and behavior. Specifically, shortens ascaroside with 5-carbon omega side chain (asc-omega-C5), 7-carbon side chain (asc-C7), 9-carbon side chain (asc-C9), 11-carbon side chain (asc-C11), 13-carbon side chain (asc-C13), 15-carbon side chain (asc-C15) and to a lesser extent ascarosides with 7-omega-carbon side chain (asc-omega-C7). Also shortens indol-3-carbonyl(IC)-ascarosides with 7-carbon side chain (IC-asc-C7) and to a lesser extent (IC)-ascarosides with 9-carbon side chain (IC-asc-C9). May associate and regulate the folding and/or the catalytic activity of other acyl-coenzyme A oxidases including acox-1.2, acox-1.3, acox-1.4 and acox-3 modulating the type of ascarosides produced. In association with acox-1.3, catalyzes the desaturation of asc-C7-CoA but not of fatty acids or hydroxylated fatty acids. Involved in the biosynthesis of asc-C6-MK (daumone 2) and asc-delta-C9 (daumone 3) but not asc-C7 (daumone 1); daumones are pheromones produced during unfavourable growth conditions which promote entry into the dauer stage. This Caenorhabditis elegans protein is Acyl-coenzyme A oxidase acox-1.1.